A 216-amino-acid polypeptide reads, in one-letter code: Small ribosomal subunit protein uS3c (216 aa).

Residues 43 to 118 (IKNYIQKNIR…KLNIAIVKIT (76 aa)) form the KH type-2 domain.

It belongs to the universal ribosomal protein uS3 family. As to quaternary structure, part of the 30S ribosomal subunit.

Its subcellular location is the plastid. The protein resides in the chloroplast. In Phaseolus vulgaris (Kidney bean), this protein is Small ribosomal subunit protein uS3c (rps3).